Consider the following 1106-residue polypeptide: DNA polymerase delta catalytic subunit (1106 aa).

Residues 1 to 28 (MDGKRRPGPGPGVPPKRARGGLWDEDEA) are disordered. A Nuclear localization signal motif is present at residues 4–19 (KRRPGPGPGVPPKRAR). Arg-19 is subject to Omega-N-methylarginine. Lys-573 is covalently cross-linked (Glycyl lysine isopeptide (Lys-Gly) (interchain with G-Cter in SUMO2)). Positions 1011, 1014, 1025, and 1028 each coordinate Zn(2+). The CysA-type zinc finger occupies 1011-1028 (CIGCRTVLSHQGAVCKFC). [4Fe-4S] cluster contacts are provided by Cys-1057, Cys-1060, Cys-1070, and Cys-1075. Residues 1057–1075 (CQRCQGSLHEDVICTSRDC) carry the CysB motif motif.

The protein belongs to the DNA polymerase type-B family. As to quaternary structure, component of the tetrameric DNA polymerase delta complex (Pol-delta4), which consists of POLD1/p125, POLD2/p50, POLD3/p66/p68 and POLD4/p12, with POLD1 bearing both DNA polymerase and 3' to 5' proofreading exonuclease activities. Within Pol-delta4, directly interacts with POLD2 and POLD4. Following genotoxic stress by DNA-damaging agents, such as ultraviolet light and methyl methanesulfonate, or by replication stress induced by treatment with hydroxyurea or aphidicolin, Pol-delta4 is converted into a trimeric form of the complex (Pol-delta3) by POLD4 degradation. Pol-delta3 is the major form at S phase replication sites and DNA damage sites. POLD1 displays different catalytic properties depending upon the complex it is found in. It exhibits higher proofreading activity and fidelity than Pol-delta4, making it particularly well suited to respond to DNA damage. Directly interacts with PCNA, as do POLD3 and POLD4; this interaction stimulates Pol-delta4 polymerase activity. As POLD2 and POLD4, directly interacts with WRNIP1; this interaction stimulates DNA polymerase delta-mediated DNA synthesis, independently of the presence of PCNA. This stimulation may be due predominantly to an increase of initiation frequency and also to increased processivity. Also observed as a dimeric complex with POLD2 (Pol-delta2). Pol-delta2 is relatively insensitive to the PCNA stimulation (2-5-fold) compared to Pol-delta4 that is stimulated by over 50-fold. Interacts with POLDIP2; this interaction is indirect and most probably mediated through POLD2-binding. Interacts with CIAO1. Interacts with POLDIP2. Interacts with RFC1. [4Fe-4S] cluster is required as a cofactor.

Its subcellular location is the nucleus. It catalyses the reaction DNA(n) + a 2'-deoxyribonucleoside 5'-triphosphate = DNA(n+1) + diphosphate. Regulated by alteration of quaternary structure. Exhibits burst rates of DNA synthesis are about 5 times faster in the presence of POLD4 (Pol-delta4 complex) than in its absence (Pol-delta3 complex), while the affinity of the enzyme for its DNA and dNTP substrates appears unchanged. The Pol-delta3 complex is more likely to proofread DNA synthesis because it cleaves single-stranded DNA twice as fast and transfers mismatched DNA from the polymerase to the exonuclease sites 9 times faster compared to the Pol-delta3 complex. Pol-delta3 also extends mismatched primers 3 times more slowly in the absence of POLD4. The conversion of Pol-delta4 into Pol-delta3 is induced by genotoxic stress or by replication stress leading POLD4 degradation. Stimulated in the presence of PCNA. This stimulation is further increased in the presence of KCTD13/PDIP1, most probably via direct interaction between KCTD13 and POLD2. Functionally, as the catalytic component of the trimeric (Pol-delta3 complex) and tetrameric DNA polymerase delta complexes (Pol-delta4 complex), plays a crucial role in high fidelity genome replication, including in lagging strand synthesis, and repair. Exhibits both DNA polymerase and 3'- to 5'-exonuclease activities. Requires the presence of accessory proteins POLD2, POLD3 and POLD4 for full activity. Depending upon the absence (Pol-delta3) or the presence of POLD4 (Pol-delta4), displays differences in catalytic activity. Most notably, expresses higher proofreading activity in the context of Pol-delta3 compared with that of Pol-delta4. Although both Pol-delta3 and Pol-delta4 process Okazaki fragments in vitro, Pol-delta3 may be better suited to fulfill this task, exhibiting near-absence of strand displacement activity compared to Pol-delta4 and stalling on encounter with the 5'-blocking oligonucleotides. Pol-delta3 idling process may avoid the formation of a gap, while maintaining a nick that can be readily ligated. Along with DNA polymerase kappa, DNA polymerase delta carries out approximately half of nucleotide excision repair (NER) synthesis following UV irradiation. Under conditions of DNA replication stress, in the presence of POLD3 and POLD4, may catalyze the repair of broken replication forks through break-induced replication (BIR). Involved in the translesion synthesis (TLS) of templates carrying O6-methylguanine, 8oxoG or abasic sites. The chain is DNA polymerase delta catalytic subunit (POLD1) from Bos taurus (Bovine).